Consider the following 247-residue polypeptide: MSKQPDRLFSQPLEQVPDFVFNEDVVRVFPDMIKRSVPGYPTIVENLGVLAARFAQPGTALYDLGASLGAVTQSLRRHVRSDGCRVIAVDNSAAMVERCRQYLTAQDSMFQELLPVHVLEADILALPFEPASVVAMNFTLQFIAPDQRLELLGRIRQALLPGGALILSEKLRFADEQAQDLLNELHLDFKRANGYSELEIAQKRSAIENVMKPDTLETHQERLRAAGFSKVVPWFQCLNFASLIALP.

Residues tyrosine 40, 65 to 67 (GAS), 90 to 91 (DN), 122 to 123 (DI), asparagine 137, and arginine 204 contribute to the S-adenosyl-L-methionine site.

This sequence belongs to the class I-like SAM-binding methyltransferase superfamily. Cx-SAM synthase family. As to quaternary structure, homodimer.

It catalyses the reaction prephenate + S-adenosyl-L-methionine = carboxy-S-adenosyl-L-methionine + 3-phenylpyruvate + H2O. Functionally, catalyzes the conversion of S-adenosyl-L-methionine (SAM) to carboxy-S-adenosyl-L-methionine (Cx-SAM). The chain is Carboxy-S-adenosyl-L-methionine synthase from Pseudomonas putida (strain ATCC 700007 / DSM 6899 / JCM 31910 / BCRC 17059 / LMG 24140 / F1).